Consider the following 139-residue polypeptide: Classical arabinogalactan protein 3 (139 aa).

Positions 1–21 (MALKTLQALIFLGLFAASCLA) are cleaved as a signal peptide. A Pyrrolidone carboxylic acid modification is found at glutamine 22. Residues 30-115 (TFLPPVESPS…PAPRADGPVA (86 aa)) are disordered. Composition is skewed to pro residues over residues 46-77 (AEPPAPVASPPIPANEPTPVPTTPPTVSPPTT) and 97-107 (PSGPTPAPAPA). Aspartate 116 is lipidated: GPI-anchor amidated aspartate. A propeptide spans 117 to 139 (SALTNKAFLVSTVIAGALYAVLA) (removed in mature form).

This sequence belongs to the classical AGP family. In terms of processing, O-glycosylated on the hydroxyproline residues. As to expression, expressed at a low level in roots.

The protein resides in the cell membrane. Its function is as follows. Proteoglycan that seems to be implicated in diverse developmental roles such as differentiation, cell-cell recognition, embryogenesis and programmed cell death. This Arabidopsis thaliana (Mouse-ear cress) protein is Classical arabinogalactan protein 3 (AGP3).